Consider the following 278-residue polypeptide: Orotidine 5'-phosphate decarboxylase (278 aa).

The Proton donor role is filled by lysine 95.

Belongs to the OMP decarboxylase family. Type 2 subfamily.

It catalyses the reaction orotidine 5'-phosphate + H(+) = UMP + CO2. It functions in the pathway pyrimidine metabolism; UMP biosynthesis via de novo pathway; UMP from orotate: step 2/2. The protein is Orotidine 5'-phosphate decarboxylase of Mycobacterium marinum (strain ATCC BAA-535 / M).